The following is a 190-amino-acid chain: Ribosome hibernation promotion factor (190 aa).

This sequence belongs to the HPF/YfiA ribosome-associated protein family. Long HPF subfamily. In terms of assembly, interacts with 100S ribosomes.

Its subcellular location is the cytoplasm. Its function is as follows. Required for dimerization of active 70S ribosomes into 100S ribosomes in stationary phase; 100S ribosomes are translationally inactive and sometimes present during exponential growth. The sequence is that of Ribosome hibernation promotion factor from Staphylococcus aureus (strain COL).